The primary structure comprises 138 residues: Small ribosomal subunit protein uS11c (138 aa).

The disordered stretch occupies residues 1–22 (MAKLLPRIGSRKNGRISSRKNA). The span at 9–22 (GSRKNGRISSRKNA) shows a compositional bias: basic residues.

This sequence belongs to the universal ribosomal protein uS11 family. In terms of assembly, part of the 30S ribosomal subunit.

The protein localises to the plastid. Its subcellular location is the chloroplast. The polypeptide is Small ribosomal subunit protein uS11c (Populus alba (White poplar)).